Reading from the N-terminus, the 463-residue chain is L-seryl-tRNA(Sec) selenium transferase (463 aa).

The residue at position 295 (K295) is an N6-(pyridoxal phosphate)lysine.

It belongs to the SelA family. As to quaternary structure, homodecamer; pentamer of dimers. Binds only one seryl-tRNA(Sec) per dimer. Pyridoxal 5'-phosphate is required as a cofactor.

The protein resides in the cytoplasm. The catalysed reaction is L-seryl-tRNA(Sec) + selenophosphate + H(+) = L-selenocysteinyl-tRNA(Sec) + phosphate. The protein operates within aminoacyl-tRNA biosynthesis; selenocysteinyl-tRNA(Sec) biosynthesis; selenocysteinyl-tRNA(Sec) from L-seryl-tRNA(Sec) (bacterial route): step 1/1. In terms of biological role, converts seryl-tRNA(Sec) to selenocysteinyl-tRNA(Sec) required for selenoprotein biosynthesis. This Escherichia coli O81 (strain ED1a) protein is L-seryl-tRNA(Sec) selenium transferase.